The chain runs to 577 residues: Acyl-coenzyme A synthetase ACSM2A, mitochondrial (577 aa).

Residues 1-46 (MHWLRKVQGLCTLWGTQMSSRTLYINSRQLVSLQWGHQEVPAKFNF) constitute a mitochondrion transit peptide. Gln139 lines the CoA pocket. ATP is bound by residues 221 to 229 (TSGTSGLPK), 359 to 364 (ESYGQT), Asp446, and Arg461. Thr364 lines the substrate pocket. Position 469-471 (469-471 (SGY)) interacts with CoA. Position 472 (Arg472) interacts with substrate. Residue Arg501 participates in CoA binding. Residue Ser513 is modified to Phosphoserine. CoA-binding positions include Lys532 and 540–542 (YPR). Lys557 provides a ligand contact to ATP.

The protein belongs to the ATP-dependent AMP-binding enzyme family. In terms of assembly, monomer. Mg(2+) serves as cofactor. The cofactor is Mn(2+).

It is found in the mitochondrion. It carries out the reaction a medium-chain fatty acid + ATP + CoA = a medium-chain fatty acyl-CoA + AMP + diphosphate. The enzyme catalyses benzoate + ATP + CoA = benzoyl-CoA + AMP + diphosphate. It catalyses the reaction hexanoate + ATP + CoA = hexanoyl-CoA + AMP + diphosphate. The catalysed reaction is butanoate + ATP + CoA = butanoyl-CoA + AMP + diphosphate. It carries out the reaction octanoate + ATP + CoA = octanoyl-CoA + AMP + diphosphate. The enzyme catalyses decanoate + ATP + CoA = decanoyl-CoA + AMP + diphosphate. Its function is as follows. Catalyzes the activation of fatty acids by CoA to produce an acyl-CoA, the first step in fatty acid metabolism. Capable of activating medium-chain fatty acids (e.g. butyric (C4) to decanoic (C10) acids), and certain carboxylate-containing xenobiotics, e.g. benzoate. This is Acyl-coenzyme A synthetase ACSM2A, mitochondrial (ACSM2A) from Homo sapiens (Human).